A 277-amino-acid chain; its full sequence is Large ribosomal subunit protein uL2 (277 aa).

Disordered stretches follow at residues 24-55 and 221-277; these read ITTSTPEKSLLRPLKKKAGRNNQGKLTVRHHG and RGSV…RKKK.

Belongs to the universal ribosomal protein uL2 family. As to quaternary structure, part of the 50S ribosomal subunit. Forms a bridge to the 30S subunit in the 70S ribosome.

In terms of biological role, one of the primary rRNA binding proteins. Required for association of the 30S and 50S subunits to form the 70S ribosome, for tRNA binding and peptide bond formation. It has been suggested to have peptidyltransferase activity; this is somewhat controversial. Makes several contacts with the 16S rRNA in the 70S ribosome. The protein is Large ribosomal subunit protein uL2 of Listeria welshimeri serovar 6b (strain ATCC 35897 / DSM 20650 / CCUG 15529 / CIP 8149 / NCTC 11857 / SLCC 5334 / V8).